A 253-amino-acid chain; its full sequence is Non-homologous end joining protein Ku (253 aa).

The Ku domain maps to I9–A192.

This sequence belongs to the prokaryotic Ku family. Homodimer. Interacts with LigD.

Functionally, with LigD forms a non-homologous end joining (NHEJ) DNA repair enzyme, which repairs dsDNA breaks with reduced fidelity. Binds linear dsDNA with 5'- and 3'- overhangs but not closed circular dsDNA nor ssDNA. Recruits and stimulates the ligase activity of LigD. This is Non-homologous end joining protein Ku from Archaeoglobus fulgidus (strain ATCC 49558 / DSM 4304 / JCM 9628 / NBRC 100126 / VC-16).